We begin with the raw amino-acid sequence, 525 residues long: MNRRYEKPPPLSVSSKGKKKHFVNHTAPNTPGNYERTQTSPTLSTARSHEPDDKLNYEIFSILESKFLFGYEDPRLLWIPQSPLRPGDSEAGPSPRSPLTPNGVVLPGTPSSSFRSPRGRICVLSIDGGGMRGLLAGKSLIYLEQMLKEKSGDPNARIADYFDVAAGSGVGGVFAAMIFATRDGNRPIFKAEDTWKFLVENAEGFYRSGSGSGGGGAGAAIKRVIRSGSGSGSSSVTAATAKLEKAMKASFADLTLKDTLKPILISCYDLSSTAPFLFSRADALESDSFDFRLRDICRATWAEPGTFDPVRTCSVDGKTRCVAVGGGLAMSNPTAAAITHVFHNKQEFPAVKGVEDLLVLSLGTGQLFEVNYDYEQVKNWRVKEWARPMARISGDGSAEFVDQAVAMGFGPYRSSNYVRIQANGSRLGACGPNVDTDPRAENVKKLTEIADEMLKQNNVESVLFGSKRIGEMSNSEKIEWFASELVIEQQRRSVRASPTVTLKQAVSKTNRNAINATLTLISKDR.

Residues 1–50 (MNRRYEKPPPLSVSSKGKKKHFVNHTAPNTPGNYERTQTSPTLSTARSHE) are disordered. The segment covering 26–46 (TAPNTPGNYERTQTSPTLSTA) has biased composition (polar residues). The PNPLA domain occupies 124 to 338 (LSIDGGGMRG…AMSNPTAAAI (215 aa)). Positions 128-133 (GGGMRG) match the GXGXXG motif. S168 serves as the catalytic Nucleophile.

This sequence belongs to the patatin family. As to expression, specifically expressed in roots.

In terms of biological role, possesses non-specific lipolytic acyl hydrolase (LAH) activity. Hydrolyzes phospholipids as well as galactolipids. May play a role in disease resistance. The polypeptide is Patatin-like protein 8 (PLP8) (Arabidopsis thaliana (Mouse-ear cress)).